Consider the following 501-residue polypeptide: Lysine--tRNA ligase (501 aa).

Mg(2+) is bound by residues glutamate 411 and glutamate 418.

It belongs to the class-II aminoacyl-tRNA synthetase family. As to quaternary structure, homodimer. Requires Mg(2+) as cofactor.

The protein localises to the cytoplasm. It catalyses the reaction tRNA(Lys) + L-lysine + ATP = L-lysyl-tRNA(Lys) + AMP + diphosphate. This Pseudomonas aeruginosa (strain UCBPP-PA14) protein is Lysine--tRNA ligase.